The chain runs to 234 residues: uncharacterized protein (234 aa).

An L-glutamine-binding site is contributed by 68–70; sequence GES. The active-site Nucleophile is the cysteine 101. Residues arginine 131 and 167–168 contribute to the L-glutamine site; that span reads IR. Active-site charge relay system residues include histidine 208 and glutamate 210.

The protein belongs to the glutaminase PdxT/SNO family.

The protein localises to the cytoplasm. The enzyme catalyses L-glutamine + H2O = L-glutamate + NH4(+). This is an uncharacterized protein from Schizosaccharomyces pombe (strain 972 / ATCC 24843) (Fission yeast).